A 111-amino-acid polypeptide reads, in one-letter code: Disintegrin CV-11-alpha (111 aa).

Residues 1-20 form the signal peptide; that stretch reads MIQVLLVIICLAVFPYQGSS. A propeptide spanning residues 21-46 is cleaved from the precursor; it reads IILESGNVNDFELVYPKKVTVLPTGA. In terms of domain architecture, Disintegrin spans 47-111; it reads MNSAHPCCDP…SDCPRNPWKD (65 aa). 4 cysteine pairs are disulfide-bonded: cysteine 53-cysteine 76, cysteine 67-cysteine 73, cysteine 72-cysteine 97, and cysteine 85-cysteine 104. Residues 89–91 carry the Cell attachment site motif; sequence KGD.

Belongs to the disintegrin family. Dimeric disintegrin subfamily. As to quaternary structure, heterodimer with subunit beta; disulfide-linked. Expressed by the venom gland.

It localises to the secreted. Its function is as follows. Inhibits ADP-induced human platelet aggregation. Antagonist of alpha-IIb/beta-3 (ITGA2B/ITGB3). The polypeptide is Disintegrin CV-11-alpha (Cerastes vipera (Sahara sand viper)).